We begin with the raw amino-acid sequence, 242 residues long: uncharacterized protein (242 aa).

The N-terminal stretch at 1–20 is a signal peptide; sequence MTFIKGLPLMLLTISLGCNA.

The protein belongs to the periplasmic pilus chaperone family.

It is found in the periplasm. Its function is as follows. Could be required for the biogenesis of the putative YbgD fimbria. This is an uncharacterized protein from Escherichia coli (strain K12).